A 332-amino-acid polypeptide reads, in one-letter code: Ribose-phosphate pyrophosphokinase (332 aa).

Residue 57–59 coordinates ATP; the sequence is DGE. The Mg(2+) site is built by His150 and Asp189. Lys213 is a catalytic residue. D-ribose 5-phosphate-binding positions include Arg215, Asp239, and 243 to 247; that span reads DTAGT.

It belongs to the ribose-phosphate pyrophosphokinase family. Class I subfamily. As to quaternary structure, homohexamer. Mg(2+) serves as cofactor.

The protein resides in the cytoplasm. The enzyme catalyses D-ribose 5-phosphate + ATP = 5-phospho-alpha-D-ribose 1-diphosphate + AMP + H(+). Its pathway is metabolic intermediate biosynthesis; 5-phospho-alpha-D-ribose 1-diphosphate biosynthesis; 5-phospho-alpha-D-ribose 1-diphosphate from D-ribose 5-phosphate (route I): step 1/1. Its function is as follows. Involved in the biosynthesis of the central metabolite phospho-alpha-D-ribosyl-1-pyrophosphate (PRPP) via the transfer of pyrophosphoryl group from ATP to 1-hydroxyl of ribose-5-phosphate (Rib-5-P). This chain is Ribose-phosphate pyrophosphokinase, found in Gloeobacter violaceus (strain ATCC 29082 / PCC 7421).